The primary structure comprises 99 residues: Aspartyl/glutamyl-tRNA(Asn/Gln) amidotransferase subunit C (99 aa).

Belongs to the GatC family. In terms of assembly, heterotrimer of A, B and C subunits.

The catalysed reaction is L-glutamyl-tRNA(Gln) + L-glutamine + ATP + H2O = L-glutaminyl-tRNA(Gln) + L-glutamate + ADP + phosphate + H(+). It catalyses the reaction L-aspartyl-tRNA(Asn) + L-glutamine + ATP + H2O = L-asparaginyl-tRNA(Asn) + L-glutamate + ADP + phosphate + 2 H(+). Allows the formation of correctly charged Asn-tRNA(Asn) or Gln-tRNA(Gln) through the transamidation of misacylated Asp-tRNA(Asn) or Glu-tRNA(Gln) in organisms which lack either or both of asparaginyl-tRNA or glutaminyl-tRNA synthetases. The reaction takes place in the presence of glutamine and ATP through an activated phospho-Asp-tRNA(Asn) or phospho-Glu-tRNA(Gln). The chain is Aspartyl/glutamyl-tRNA(Asn/Gln) amidotransferase subunit C from Corynebacterium efficiens (strain DSM 44549 / YS-314 / AJ 12310 / JCM 11189 / NBRC 100395).